The primary structure comprises 295 residues: Nucleotide-binding protein EF_0766 (295 aa).

Residue 12-19 (GMSGAGKT) coordinates ATP. Residue 62–65 (DLRS) participates in GTP binding.

The protein belongs to the RapZ-like family.

In terms of biological role, displays ATPase and GTPase activities. In Enterococcus faecalis (strain ATCC 700802 / V583), this protein is Nucleotide-binding protein EF_0766.